Reading from the N-terminus, the 281-residue chain is 2,3,4,5-tetrahydropyridine-2,6-dicarboxylate N-succinyltransferase (281 aa).

Residues R108 and D145 each coordinate substrate.

This sequence belongs to the transferase hexapeptide repeat family. As to quaternary structure, homotrimer.

Its subcellular location is the cytoplasm. The enzyme catalyses (S)-2,3,4,5-tetrahydrodipicolinate + succinyl-CoA + H2O = (S)-2-succinylamino-6-oxoheptanedioate + CoA. Its pathway is amino-acid biosynthesis; L-lysine biosynthesis via DAP pathway; LL-2,6-diaminopimelate from (S)-tetrahydrodipicolinate (succinylase route): step 1/3. This Rhodopseudomonas palustris (strain BisB5) protein is 2,3,4,5-tetrahydropyridine-2,6-dicarboxylate N-succinyltransferase.